Consider the following 522-residue polypeptide: Glycogen synthase (522 aa).

The disordered stretch occupies residues 1–29 (MISAVLDTQGDHPQQQAGDRAAPSVPVPG). K58 contributes to the ADP-alpha-D-glucose binding site.

Belongs to the glycosyltransferase 1 family. Bacterial/plant glycogen synthase subfamily.

It catalyses the reaction [(1-&gt;4)-alpha-D-glucosyl](n) + ADP-alpha-D-glucose = [(1-&gt;4)-alpha-D-glucosyl](n+1) + ADP + H(+). Its pathway is glycan biosynthesis; glycogen biosynthesis. Its function is as follows. Synthesizes alpha-1,4-glucan chains using ADP-glucose. The chain is Glycogen synthase from Pseudomonas fluorescens (strain ATCC BAA-477 / NRRL B-23932 / Pf-5).